A 363-amino-acid chain; its full sequence is Cyanide hydratase (363 aa).

The CN hydrolase domain maps to 6 to 285; the sequence is YKAACVTSEP…DGLLFVDIDL (280 aa). The active-site Proton acceptor is the Glu46. Residue Lys128 is part of the active site. Cys163 functions as the Nucleophile in the catalytic mechanism.

The protein belongs to the carbon-nitrogen hydrolase superfamily. Nitrilase family. Oligomer of dimers, forming left-handed helical fibers.

The enzyme catalyses formamide = hydrogen cyanide + H2O. Catalyzes the hydration of cyanide to formamide. Degradation of cyanide may be important for plant pathogenic fungi in infection of cyanogenic plants. This chain is Cyanide hydratase (CyhAB), found in Alternaria brassicicola (Dark leaf spot agent).